Here is a 411-residue protein sequence, read N- to C-terminus: MGSLRAILKNPEDLYPLVKLKLAARHAEKQIPPSPNWGFCYSMLHKVSRSFALVIQQLPVELRDAVCIFYLVLRALDTVEDDTSIPTDVKVPILISFHQHVYDREWHFSCGTKEYKVLMDQFHHVSTAFLELRKHYQQAIEDITMRMGAGMAKFICKEVETTDDYDEYCHYVAGLVGLGLSKLFHASEKEDLASDSLSNSMGLFLQKTNIIRDYLEDINEVPKCRMFWPREIWSKYVNKLEELKYEDNSAKAVQCLNDMVTNALPHVEDCLTYMSALRDPSIFRFCAIPQVMAIGTLAMCYDNIEVFRGVVKMRRGLTAKVIDRTRTIADVYGAFFDFSCMLKSKVNNNDPNATKTLKRLEVILKTCRDSGTLNKRKSYIIRSEPNYSPVLIVVIFIILAIILAQLSGNRS.

The next 2 membrane-spanning stretches (helical) occupy residues 281-301 (SIFR…AMCY) and 388-408 (SPVL…QLSG).

It belongs to the phytoene/squalene synthase family. It depends on Mg(2+) as a cofactor.

It is found in the endoplasmic reticulum membrane. The catalysed reaction is 2 (2E,6E)-farnesyl diphosphate + NADPH + H(+) = squalene + 2 diphosphate + NADP(+). The enzyme catalyses 2 (2E,6E)-farnesyl diphosphate + NADH + H(+) = squalene + 2 diphosphate + NAD(+). Its pathway is terpene metabolism; lanosterol biosynthesis; lanosterol from farnesyl diphosphate: step 1/3. The protein is Squalene synthase of Nicotiana benthamiana.